The chain runs to 406 residues: 4-O-methyl-glucuronoyl methylesterase (406 aa).

A signal peptide spans 1–17 (MAFRWLSFLLLALPVLA). Cys31 and Cys64 form a disulfide bridge. 4 N-linked (GlcNAc...) asparagine glycosylation sites follow: Asn100, Asn110, Asn122, and Asn178. Positions 215-220 (GCSRDG) match the GXSYXG catalytic site motif motif. Disulfide bonds link Cys216-Cys352 and Cys248-Cys324. Ser217 (nucleophile) is an active-site residue. Lys221, Gln263, and Glu271 together coordinate substrate. N-linked (GlcNAc...) asparagine glycosylation is present at Asn285. Residue Trp315 coordinates substrate. A glycan (N-linked (GlcNAc...) asparagine) is linked at Asn348. The Proton donor/acceptor role is filled by His351. N-linked (GlcNAc...) asparagine glycosylation is found at Asn376, Asn387, and Asn398.

The protein belongs to the carbohydrate esterase 15 (CE15) family.

Its subcellular location is the secreted. It carries out the reaction a 4-O-methyl-alpha-D-glucuronosyl ester derivative + H2O = 4-O-methyl-alpha-D-glucuronate derivative + an alcohol + H(+). Functionally, glucuronoyl esterase which may play a significant role in biomass degradation, as it is considered to disconnect hemicellulose from lignin through the hydrolysis of the ester bond between 4-O-methyl-D-glucuronic acid residues of glucuronoxylans and aromatic alcohols of lignin. The chain is 4-O-methyl-glucuronoyl methylesterase from Phanerochaete carnosa (strain HHB-10118-sp) (White-rot fungus).